The sequence spans 265 residues: Apolipoprotein A-I (265 aa).

Residues 1 to 18 (MKAVVLTLAVLFLTGSQA) form the signal peptide. 2 tandem repeats follow at residues 67 to 88 (LKLLDNWDSLTSTFAKVREQLG) and 89 to 110 (PVTREFWDNLEKETESLRQEMN). A 10 X approximate tandem repeats region spans residues 67-265 (LKLLDNWDSL…DEASKKLNAQ (199 aa)). Position 109 is a methionine sulfoxide (Met-109). The 3; half-length repeat unit spans residues 111–121 (KDLQEVKQKVQ). A run of 5 repeats spans residues 122-142 (PYLDEFQKKWQEELQIYRQKV), 144-165 (PLGEELREGARQKVQELQDKLT), 166-187 (PLAEEMRDRARAHVETLRQQLA), 188-209 (PYSDELRQRMAARFEMLKEGGG), and 210-230 (SLVQYHAKASEQLKALGEKAK). One copy of the 9; half-length repeat lies at 231–241 (PALEDLRQGLL). The stretch at 242 to 265 (PVLENLKVSILAAIDEASKKLNAQ) is repeat 10.

Belongs to the apolipoprotein A1/A4/E family. As to quaternary structure, homodimer. Interacts with APOA1BP and CLU. Component of a sperm activating protein complex (SPAP), consisting of APOA1, an immunoglobulin heavy chain, an immunoglobulin light chain and albumin. Interacts with NDRG1. Interacts with SCGB3A2. Interacts with NAXE and YJEFN3. In terms of processing, glycosylated. Palmitoylated. Post-translationally, phosphorylation sites are present in the extracellular medium. Major protein of plasma HDL, also found in chylomicrons.

It is found in the secreted. Its function is as follows. Participates in the reverse transport of cholesterol from tissues to the liver for excretion by promoting cholesterol efflux from tissues and by acting as a cofactor for the lecithin cholesterol acyltransferase (LCAT). As part of the SPAP complex, activates spermatozoa motility. In Balaenoptera acutorostrata scammoni (North Pacific minke whale), this protein is Apolipoprotein A-I (APOA1).